Consider the following 315-residue polypeptide: Methionyl-tRNA formyltransferase (315 aa).

113–116 (SILP) is a (6S)-5,6,7,8-tetrahydrofolate binding site.

The protein belongs to the Fmt family.

It catalyses the reaction L-methionyl-tRNA(fMet) + (6R)-10-formyltetrahydrofolate = N-formyl-L-methionyl-tRNA(fMet) + (6S)-5,6,7,8-tetrahydrofolate + H(+). Functionally, attaches a formyl group to the free amino group of methionyl-tRNA(fMet). The formyl group appears to play a dual role in the initiator identity of N-formylmethionyl-tRNA by promoting its recognition by IF2 and preventing the misappropriation of this tRNA by the elongation apparatus. The polypeptide is Methionyl-tRNA formyltransferase (Aliivibrio fischeri (strain MJ11) (Vibrio fischeri)).